The primary structure comprises 469 residues: Phosphatidylinositol 4-kinase type 2-alpha (469 aa).

Disordered regions lie at residues 1–30 (MDETSPLVSPDRDQTEYSYQSQCSPGATVP) and 50–72 (TATSCGSAASGPSPPGSPCDQER). Residues 16–25 (EYSYQSQCSP) are compositionally biased toward polar residues. The span at 50–60 (TATSCGSAASG) shows a compositional bias: low complexity. One can recognise a PI3K/PI4K catalytic domain in the interval 115–443 (DILPERISQG…VQTPPVIVET (329 aa)). Positions 121 to 127 (ISQGSSG) are G-loop. ATP is bound by residues 122 to 128 (SQGSSGS) and Lys143. An important for substrate binding region spans residues 148–150 (EPY). An important for interaction with membranes region spans residues 156 to 169 (KWTKWLQKLCCPCC). Residues Cys165, Cys166, Cys168, and Cys169 are each lipidated (S-palmitoyl cysteine). 252 to 255 (QIFV) contacts ATP. An important for interaction with membranes region spans residues 259–267 (KDADYWLRR). The catalytic loop stretch occupies residues 296–304 (RNTDRGNDN). The tract at residues 334–354 (AIDNGLAFPLKHPDSWRAYPF) is activation loop. Asp336 contributes to the ATP binding site. An important for interaction with membranes region spans residues 349–358 (WRAYPFYWAW).

It belongs to the PI3/PI4-kinase family. Type II PI4K subfamily.

The protein resides in the golgi apparatus. It is found in the trans-Golgi network membrane. The protein localises to the membrane raft. Its subcellular location is the endosome. It localises to the endosome membrane. The protein resides in the cytoplasmic vesicle. It is found in the cell projection. The protein localises to the dendrite. Its subcellular location is the presynaptic cell membrane. It localises to the synapse. The protein resides in the synaptosome. It is found in the mitochondrion. The protein localises to the membrane. Its subcellular location is the cell membrane. It localises to the perikaryon. The protein resides in the neuron projection. It catalyses the reaction a 1,2-diacyl-sn-glycero-3-phospho-(1D-myo-inositol) + ATP = a 1,2-diacyl-sn-glycero-3-phospho-(1D-myo-inositol 4-phosphate) + ADP + H(+). Its function is as follows. Membrane-bound phosphatidylinositol-4 kinase (PI4-kinase) that catalyzes the phosphorylation of phosphatidylinositol (PI) to phosphatidylinositol 4-phosphate (PI4P), a lipid that plays important roles in endocytosis, Golgi function, protein sorting and membrane trafficking. Besides, phosphorylation of phosphatidylinositol (PI) to phosphatidylinositol 4-phosphate (PI4P) is the first committed step in the generation of phosphatidylinositol 4,5-bisphosphate (PIP2), a precursor of the second messenger inositol 1,4,5-trisphosphate (InsP3). The polypeptide is Phosphatidylinositol 4-kinase type 2-alpha (pi4k2a) (Xenopus laevis (African clawed frog)).